The chain runs to 156 residues: ATP synthase subunit b (156 aa).

Residues 12–32 (VAFLIFVLFCMKYVWPPVITA) traverse the membrane as a helical segment.

Belongs to the ATPase B chain family. F-type ATPases have 2 components, F(1) - the catalytic core - and F(0) - the membrane proton channel. F(1) has five subunits: alpha(3), beta(3), gamma(1), delta(1), epsilon(1). F(0) has three main subunits: a(1), b(2) and c(10-14). The alpha and beta chains form an alternating ring which encloses part of the gamma chain. F(1) is attached to F(0) by a central stalk formed by the gamma and epsilon chains, while a peripheral stalk is formed by the delta and b chains.

It localises to the cell inner membrane. In terms of biological role, f(1)F(0) ATP synthase produces ATP from ADP in the presence of a proton or sodium gradient. F-type ATPases consist of two structural domains, F(1) containing the extramembraneous catalytic core and F(0) containing the membrane proton channel, linked together by a central stalk and a peripheral stalk. During catalysis, ATP synthesis in the catalytic domain of F(1) is coupled via a rotary mechanism of the central stalk subunits to proton translocation. Component of the F(0) channel, it forms part of the peripheral stalk, linking F(1) to F(0). This is ATP synthase subunit b from Pseudomonas putida (strain GB-1).